A 431-amino-acid polypeptide reads, in one-letter code: Glycerol-3-phosphate dehydrogenase [NAD(P)+] (431 aa).

NADPH is bound by residues Ser-79, Phe-80, Arg-100, and Lys-173. Sn-glycerol 3-phosphate is bound by residues Lys-173 and Gly-201. An NADPH-binding site is contributed by Ala-205. Positions 256, 309, 319, 320, and 321 each coordinate sn-glycerol 3-phosphate. Lys-256 (proton acceptor) is an active-site residue. Arg-320 contacts NADPH. Position 346 (Glu-346) interacts with NADPH.

Belongs to the NAD-dependent glycerol-3-phosphate dehydrogenase family.

The protein resides in the cytoplasm. The enzyme catalyses sn-glycerol 3-phosphate + NAD(+) = dihydroxyacetone phosphate + NADH + H(+). The catalysed reaction is sn-glycerol 3-phosphate + NADP(+) = dihydroxyacetone phosphate + NADPH + H(+). It functions in the pathway membrane lipid metabolism; glycerophospholipid metabolism. In terms of biological role, catalyzes the reduction of the glycolytic intermediate dihydroxyacetone phosphate (DHAP) to sn-glycerol 3-phosphate (G3P), the key precursor for phospholipid synthesis. The protein is Glycerol-3-phosphate dehydrogenase [NAD(P)+] of Psychrobacter cryohalolentis (strain ATCC BAA-1226 / DSM 17306 / VKM B-2378 / K5).